The chain runs to 426 residues: Tyrosine--tRNA ligase (426 aa).

Residue tyrosine 38 coordinates L-tyrosine. The 'HIGH' region signature appears at 43-52; the sequence is PTADSLHIGS. L-tyrosine contacts are provided by tyrosine 176 and glutamine 180. The short motif at 236-240 is the 'KMSKS' region element; that stretch reads KFGKT. Residue lysine 239 participates in ATP binding. Positions 359 to 426 constitute an S4 RNA-binding domain; the sequence is QTIVEVLTQS…KKLFNLYIWK (68 aa).

This sequence belongs to the class-I aminoacyl-tRNA synthetase family. TyrS type 1 subfamily. Homodimer.

The protein resides in the cytoplasm. The catalysed reaction is tRNA(Tyr) + L-tyrosine + ATP = L-tyrosyl-tRNA(Tyr) + AMP + diphosphate + H(+). Functionally, catalyzes the attachment of tyrosine to tRNA(Tyr) in a two-step reaction: tyrosine is first activated by ATP to form Tyr-AMP and then transferred to the acceptor end of tRNA(Tyr). The chain is Tyrosine--tRNA ligase from Aliivibrio fischeri (strain ATCC 700601 / ES114) (Vibrio fischeri).